Consider the following 821-residue polypeptide: DNA ligase (821 aa).

NAD(+) contacts are provided by residues 50-54, 99-100, and Glu140; these read DAEYD and SL. Catalysis depends on Lys142, which acts as the N6-AMP-lysine intermediate. Residues Arg163, Glu200, Lys319, and Lys343 each contribute to the NAD(+) site. Zn(2+) is bound by residues Cys452, Cys455, Cys470, and Cys476. Positions 742–821 constitute a BRCT domain; it reads AAALPLEGKT…AGLQALLAGN (80 aa).

This sequence belongs to the NAD-dependent DNA ligase family. LigA subfamily. Requires Mg(2+) as cofactor. Mn(2+) is required as a cofactor.

It catalyses the reaction NAD(+) + (deoxyribonucleotide)n-3'-hydroxyl + 5'-phospho-(deoxyribonucleotide)m = (deoxyribonucleotide)n+m + AMP + beta-nicotinamide D-nucleotide.. Functionally, DNA ligase that catalyzes the formation of phosphodiester linkages between 5'-phosphoryl and 3'-hydroxyl groups in double-stranded DNA using NAD as a coenzyme and as the energy source for the reaction. It is essential for DNA replication and repair of damaged DNA. This Chromobacterium violaceum (strain ATCC 12472 / DSM 30191 / JCM 1249 / CCUG 213 / NBRC 12614 / NCIMB 9131 / NCTC 9757 / MK) protein is DNA ligase.